Consider the following 67-residue polypeptide: Large ribosomal subunit protein bL35 (67 aa).

It belongs to the bacterial ribosomal protein bL35 family.

This is Large ribosomal subunit protein bL35 from Bartonella quintana (strain Toulouse) (Rochalimaea quintana).